Consider the following 637-residue polypeptide: Probable ATP-binding protein YheS (637 aa).

ABC transporter domains follow at residues 2–246 and 313–527; these read IVFS…AQQQ and LKME…KQEN. ATP-binding positions include 34 to 41 and 345 to 352; these read GKNGCGKS and GRNGAGKS. The segment at 523-559 is disordered; sequence QKQENQTDEAPKENANSAQARKDQKRREAELRAQTQP. Residues 542–553 are compositionally biased toward basic and acidic residues; it reads ARKDQKRREAEL.

Belongs to the ABC transporter superfamily. ABCF family. YheS subfamily.

Its function is as follows. Genetic data indicate it may be involved in ribosome assembly or function. Ectopic expression exacerbates the cold-sensitive growth phenotype of a bipA deletion. The polypeptide is Probable ATP-binding protein YheS (yheS) (Escherichia coli O6:H1 (strain CFT073 / ATCC 700928 / UPEC)).